The primary structure comprises 284 residues: Large ribosomal subunit protein uL2 (284 aa).

2 disordered regions span residues E28–S50 and R232–K284. Positions R36 to F46 are enriched in basic residues. Positions D240–H250 are enriched in basic and acidic residues. Over residues K264–K284 the composition is skewed to basic residues.

The protein belongs to the universal ribosomal protein uL2 family. Part of the 50S ribosomal subunit. Forms a bridge to the 30S subunit in the 70S ribosome.

One of the primary rRNA binding proteins. Required for association of the 30S and 50S subunits to form the 70S ribosome, for tRNA binding and peptide bond formation. It has been suggested to have peptidyltransferase activity; this is somewhat controversial. Makes several contacts with the 16S rRNA in the 70S ribosome. The polypeptide is Large ribosomal subunit protein uL2 (Chlamydia muridarum (strain MoPn / Nigg)).